Here is a 315-residue protein sequence, read N- to C-terminus: Porphobilinogen deaminase (315 aa).

Residue cysteine 234 is modified to S-(dipyrrolylmethanemethyl)cysteine.

Belongs to the HMBS family. As to quaternary structure, monomer. The cofactor is dipyrromethane.

It carries out the reaction 4 porphobilinogen + H2O = hydroxymethylbilane + 4 NH4(+). The protein operates within porphyrin-containing compound metabolism; protoporphyrin-IX biosynthesis; coproporphyrinogen-III from 5-aminolevulinate: step 2/4. In terms of biological role, tetrapolymerization of the monopyrrole PBG into the hydroxymethylbilane pre-uroporphyrinogen in several discrete steps. The protein is Porphobilinogen deaminase of Mycobacterium avium (strain 104).